Here is a 2390-residue protein sequence, read N- to C-terminus: Spectrin beta chain, non-erythrocytic 2 (2390 aa).

Position 2 is an N-acetylserine (serine 2). The interval 2-278 is actin-binding; that stretch reads SSTLSPTDFD…IITYVATYYH (277 aa). Phosphoserine is present on residues serine 6 and serine 31. 2 Calponin-homology (CH) domains span residues 57 to 161 and 176 to 281; these read AVQK…LRFQ and KSAK…HYFS. 6 Spectrin repeats span residues 306 to 414, 427 to 527, 532 to 639, 642 to 744, 749 to 849, and 855 to 954; these read LVEK…LALR, AARF…RERL, ELQK…RLEE, RLWR…QRLA, LYQF…RALE, and YTML…KAAL. Residue serine 959 is modified to Phosphoserine. Spectrin repeat units follow at residues 960–1063, 1066–1169, 1174–1262, 1279–1379, 1384–1485, 1489–1586, 1589–1692, 1696–1797, 1801–1904, 1910–2010, and 2017–2076; these read IQNY…SLGE, RLQD…GRLA, FQGF…RHKK, EQQH…ARSL, RAEL…RRLQ, EQHQ…RLED, RAQQ…RLQE, LCQL…GQVL, YELQ…QLLL, FRFF…DWLQ, and VFGR…EKLT. Serine 1073 carries the post-translational modification Phosphoserine. The span at 2081–2096 shows a compositional bias: basic and acidic residues; the sequence is REKERKRKREEEERRK. Disordered regions lie at residues 2081–2222 and 2331–2390; these read REKE…EQME and SSAS…KKNK. Positions 2116–2125 are enriched in polar residues; sequence QTASDTTWDG. Phosphoserine is present on residues serine 2171 and serine 2199. The region spanning 2218 to 2328 is the PH domain; it reads QEQMEGMLCR…WLRVVNAAIA (111 aa). Residue threonine 2354 is modified to Phosphothreonine. At serine 2359 the chain carries Phosphoserine. Basic and acidic residues predominate over residues 2370–2383; that stretch reads RSKDGREREREKRF.

The protein belongs to the spectrin family. As to expression, highly expressed in brain, kidney, pancreas, and liver, and at lower levels in lung and placenta.

It localises to the cytoplasm. The protein resides in the cytoskeleton. The protein localises to the cell cortex. Functionally, probably plays an important role in neuronal membrane skeleton. This is Spectrin beta chain, non-erythrocytic 2 (SPTBN2) from Homo sapiens (Human).